The chain runs to 258 residues: Imidazole glycerol phosphate synthase subunit HisF (258 aa).

Catalysis depends on residues aspartate 11 and aspartate 130.

Belongs to the HisA/HisF family. Heterodimer of HisH and HisF.

The protein resides in the cytoplasm. It carries out the reaction 5-[(5-phospho-1-deoxy-D-ribulos-1-ylimino)methylamino]-1-(5-phospho-beta-D-ribosyl)imidazole-4-carboxamide + L-glutamine = D-erythro-1-(imidazol-4-yl)glycerol 3-phosphate + 5-amino-1-(5-phospho-beta-D-ribosyl)imidazole-4-carboxamide + L-glutamate + H(+). Its pathway is amino-acid biosynthesis; L-histidine biosynthesis; L-histidine from 5-phospho-alpha-D-ribose 1-diphosphate: step 5/9. In terms of biological role, IGPS catalyzes the conversion of PRFAR and glutamine to IGP, AICAR and glutamate. The HisF subunit catalyzes the cyclization activity that produces IGP and AICAR from PRFAR using the ammonia provided by the HisH subunit. The protein is Imidazole glycerol phosphate synthase subunit HisF of Escherichia coli O7:K1 (strain IAI39 / ExPEC).